We begin with the raw amino-acid sequence, 130 residues long: Small ribosomal subunit protein uS9 (130 aa).

This sequence belongs to the universal ribosomal protein uS9 family.

The polypeptide is Small ribosomal subunit protein uS9 (Bordetella avium (strain 197N)).